The sequence spans 185 residues: Large ribosomal subunit protein uL22 (185 aa).

Positions 158–185 (AKPREDEPHKKKISKKKLARAKEKMLRE) are disordered. Residues 167 to 176 (KKKISKKKLA) are compositionally biased toward basic residues.

Belongs to the universal ribosomal protein uL22 family.

The chain is Large ribosomal subunit protein uL22 (RpL17) from Diaphorina citri (Asian citrus psyllid).